The sequence spans 164 residues: Heat shock protein beta-6 (164 aa).

The tract at residues 1–72 (MEIPVSVQPS…PTAQVSTDPG (72 aa)) is involved in stabilization of the HSPB1:HSBP6 heterodimer. Ser-16 bears the Phosphoserine mark. The sHSP domain maps to 56-163 (RAPSVALPTA…PLQSPPGAAA (108 aa)). Gln-66 is subject to Deamidated glutamine. Residue Ser-157 is modified to Phosphoserine.

This sequence belongs to the small heat shock protein (HSP20) family. As to quaternary structure, homodimer. Small heat shock proteins form high molecular mass oligomers containing variable number of monomers; these oligomers display a very flexible quaternary structure easily exchanging their subunits. Heterooligomer with HSPB1; formed through oligomerization of HSPB1:HSBP6 dimers; subunit exchange leads to formation of at least two different heterooligomeric complexes, differing in variable quantities of HSPB1 and HSPB6 homodimers in addition to HSPB1:HSPB6 heterodimers. Heterooligomer with CRYAB; large heterooligomers consist of CRYAB homodimers and HSPB5:HSPB6 heterodimers but lacking HSPB6 homodimers. Interacts with BAG3. Interacts (phosphorylated) with YWHAZ. Interacts with PDE4A and PDE4D; required for maintenance of the non-phosphorylated state of HSPB6 under basal conditions. Interacts with KDR. Interacts with PRKD1. Post-translationally, phosphorylated at Ser-16 by PKA and probably PKD1K; required to protect cardiomyocytes from apoptosis.

The protein localises to the cytoplasm. It localises to the nucleus. Its subcellular location is the secreted. Small heat shock protein which functions as a molecular chaperone probably maintaining denatured proteins in a folding-competent state. Seems to have versatile functions in various biological processes. Plays a role in regulating muscle function such as smooth muscle vasorelaxation and cardiac myocyte contractility. May regulate myocardial angiogenesis implicating KDR. Overexpression mediates cardioprotection and angiogenesis after induced damage. Stabilizes monomeric YWHAZ thereby supporting YWHAZ chaperone-like activity. This chain is Heat shock protein beta-6 (HSPB6), found in Bos taurus (Bovine).